A 518-amino-acid polypeptide reads, in one-letter code: Centromere protein T (518 aa).

The interval 1-70 (MADLSSPDGD…RKHSHGTGSV (70 aa)) is disordered. Residues 19–28 (HVLDTADSHT) show a composition bias toward basic and acidic residues. Residues 34 to 57 (STQTNPQRRRSQTPYSKRQGSQRK) show a composition bias toward polar residues. The residue at position 86 (Thr-86) is a Phosphothreonine. Residues 94 to 381 (ILLTAPESST…EPHQLFEPPP (288 aa)) form a flexible stalk domain region. Disordered regions lie at residues 102 to 156 (STVM…KRKQ), 271 to 362 (VHHS…ELSS), and 375 to 412 (QLFE…HQDP). Polar residues predominate over residues 294–306 (TPSTGTRPQSQMS). A phosphoserine mark is found at Ser-313, Ser-324, Ser-333, Ser-345, Ser-346, Ser-357, and Ser-382. Basic and acidic residues predominate over residues 326-343 (ELREAVGSKEAEEPKDLE). Over residues 384–395 (GVAAVSSESVPA) the composition is skewed to low complexity.

This sequence belongs to the CENP-T/CNN1 family. Component of the CENPA-CAD complex, composed of CENPI, CENPK, CENPL, CENPO, CENPP, CENPQ, CENPR and CENPS. The CENPA-CAD complex is probably recruited on centromeres by the CENPA-NAC complex, at least composed of CENPA, CENPC, CENPH, CENPM, CENPN, CENPT and CENPU. Identified in a centromeric complex containing histones H2A, H2B, H3 and H4, and at least CENPA, CENPB, CENPC, CENPT, CENPN, HJURP, SUPT16H, SSRP1 and RSF1. Interacts (via N-terminus) with the NDC80 complex. Heterodimer with CENPW; this dimer coassembles with CENPS-CENPX heterodimers at centromeres to form the tetrameric CENP-T-W-S-X complex. In terms of processing, dynamically phosphorylated during the cell cycle. Phosphorylated during G2 phase, metaphase and anaphase, but not during telophase or G1 phase.

It localises to the nucleus. The protein localises to the chromosome. The protein resides in the centromere. It is found in the kinetochore. In terms of biological role, component of the CENPA-NAC (nucleosome-associated) complex, a complex that plays a central role in assembly of kinetochore proteins, mitotic progression and chromosome segregation. The CENPA-NAC complex recruits the CENPA-CAD (nucleosome distal) complex and may be involved in incorporation of newly synthesized CENPA into centromeres. Part of a nucleosome-associated complex that binds specifically to histone H3-containing nucleosomes at the centromere, as opposed to nucleosomes containing CENPA. Component of the heterotetrameric CENP-T-W-S-X complex that binds and supercoils DNA, and plays an important role in kinetochore assembly. CENPT has a fundamental role in kinetochore assembly and function. It is one of the inner kinetochore proteins, with most further proteins binding downstream. Required for normal chromosome organization and normal progress through mitosis. This Rattus norvegicus (Rat) protein is Centromere protein T (Cenpt).